Reading from the N-terminus, the 77-residue chain is MMTEDQKFKYLTKIEELEAGCFSDWTKEDITGDLKYLKKGIIEESIELIRAVNGLTYSEELHDFTQEIIEELDISPL.

In terms of assembly, interacts with host homodimeric histone-like protein (HU) hupA; thereby replacing dsDNA from the HU-DNA complex.

Its function is as follows. Acts as a host growth inhibitor by inhibiting DNA-binding of microbial histone-like protein HU, thereby preventing chromosome segregation and causing filamentous cell morphology and growth defects in the host. The sequence is that of Inhibitor of histone-like protein HU from Bacillus phage SP01 (Bacteriophage SP01).